We begin with the raw amino-acid sequence, 259 residues long: Undecaprenyl-diphosphatase 4 (259 aa).

Transmembrane regions (helical) follow at residues 1–21, 39–59, 71–91, 99–119, 133–153, 174–194, 208–228, and 239–259; these read MNWL…FLPI, AGLF…FIYY, FSKL…IGLL, ISKT…FLYM, ITYK…FPAI, AYFS…LQFV, SLIV…SWMI, and FAYY…TDVF.

This sequence belongs to the UppP family.

Its subcellular location is the cell membrane. The enzyme catalyses di-trans,octa-cis-undecaprenyl diphosphate + H2O = di-trans,octa-cis-undecaprenyl phosphate + phosphate + H(+). In terms of biological role, catalyzes the dephosphorylation of undecaprenyl diphosphate (UPP). Confers resistance to bacitracin. The polypeptide is Undecaprenyl-diphosphatase 4 (Bacillus cereus (strain ZK / E33L)).